The chain runs to 340 residues: L-galactonate-5-dehydrogenase (340 aa).

Residues Cys-40, Cys-65, Cys-92, Cys-95, Cys-98, Cys-106, and Glu-146 each coordinate Zn(2+).

Belongs to the zinc-containing alcohol dehydrogenase family. Requires Zn(2+) as cofactor.

The enzyme catalyses L-galactonate + NAD(+) = keto-D-tagaturonate + NADH + H(+). Inhibited by EDTA. In terms of biological role, catalyzes the oxidation of L-galactonate to D-tagaturonate. Required for growth on L-galactonate as the sole carbon source. In vitro, can also use L-gulonate. The polypeptide is L-galactonate-5-dehydrogenase (lgoD) (Escherichia coli (strain K12)).